The following is a 122-amino-acid chain: MALDVDGIIAQLKDASILELNDLVKSIEDEFGVKAAAPVAAGAAAGADAAAAKDTYDVELTEAGQEKVKVIKAVREITGLGLKDAKGMVDAAPKVIKEGLSEDDANKLKEQLEGVGATVTLK.

This sequence belongs to the bacterial ribosomal protein bL12 family. As to quaternary structure, homodimer. Part of the ribosomal stalk of the 50S ribosomal subunit. Forms a multimeric L10(L12)X complex, where L10 forms an elongated spine to which 2 to 4 L12 dimers bind in a sequential fashion. Binds GTP-bound translation factors.

In terms of biological role, forms part of the ribosomal stalk which helps the ribosome interact with GTP-bound translation factors. Is thus essential for accurate translation. The chain is Large ribosomal subunit protein bL12 from Lacticaseibacillus casei (strain BL23) (Lactobacillus casei).